Consider the following 107-residue polypeptide: Putative double-stranded DNA mimic protein Spro_2690 (107 aa).

Belongs to the putative dsDNA mimic protein family.

Its function is as follows. May act as a double-stranded DNA (dsDNA) mimic. Probably regulates the activity of a dsDNA-binding protein. This Serratia proteamaculans (strain 568) protein is Putative double-stranded DNA mimic protein Spro_2690.